A 421-amino-acid polypeptide reads, in one-letter code: G/T mismatch-specific thymine DNA glycosylase (421 aa).

The tract at residues 45–108 is disordered; the sequence is PNMATVTEQQ…STKSKEKQEK (64 aa). A compositionally biased stretch (basic and acidic residues) spans 77–89; it reads RAAEPQEPVEPKK. Residues 91–100 are compositionally biased toward basic residues; it reads ATSKKSGKST. Glycyl lysine isopeptide (Lys-Gly) (interchain with G-Cter in SUMO2) cross-links involve residues K114 and K259. Residue K341 forms a Glycyl lysine isopeptide (Lys-Gly) (interchain with G-Cter in SUMO); alternate linkage. K341 is covalently cross-linked (Glycyl lysine isopeptide (Lys-Gly) (interchain with G-Cter in SUMO2); alternate).

This sequence belongs to the uracil-DNA glycosylase (UDG) superfamily. TDG/mug family. In terms of assembly, homodimer. Interacts with AICDA and GADD45A. In terms of processing, sumoylation on Lys-341 by either SUMO1 or SUMO2 induces dissociation of the product DNA.

Its subcellular location is the nucleus. The catalysed reaction is Hydrolyzes mismatched double-stranded DNA and polynucleotides, releasing free thymine.. Its function is as follows. DNA glycosylase that plays a key role in active DNA demethylation: specifically recognizes and binds 5-formylcytosine (5fC) and 5-carboxylcytosine (5caC) in the context of CpG sites and mediates their excision through base-excision repair (BER) to install an unmethylated cytosine. Cannot remove 5-hydroxymethylcytosine (5hmC). According to an alternative model, involved in DNA demethylation by mediating DNA glycolase activity toward 5-hydroxymethyluracil (5hmU) produced by deamination of 5hmC. Also involved in DNA repair by acting as a thymine-DNA glycosylase that mediates correction of G/T mispairs to G/C pairs: in the DNA of higher eukaryotes, hydrolytic deamination of 5-methylcytosine to thymine leads to the formation of G/T mismatches. Its role in the repair of canonical base damage is however minor compared to its role in DNA demethylation. It is capable of hydrolyzing the carbon-nitrogen bond between the sugar-phosphate backbone of the DNA and a mispaired thymine. In addition to the G/T, it can remove thymine also from C/T and T/T mispairs in the order G/T &gt;&gt; C/T &gt; T/T. It has no detectable activity on apyrimidinic sites and does not catalyze the removal of thymine from A/T pairs or from single-stranded DNA. It can also remove uracil and 5-bromouracil from mispairs with guanine. This Mus musculus (Mouse) protein is G/T mismatch-specific thymine DNA glycosylase (Tdg).